The following is a 442-amino-acid chain: HTH-type transcriptional regulator NorG (442 aa).

The HTH gntR-type domain maps to K2–Y46. Residues H6–E25 constitute a DNA-binding region (H-T-H motif). K288 bears the N6-(pyridoxal phosphate)lysine mark.

The protein in the C-terminal section; belongs to the class-I pyridoxal-phosphate-dependent aminotransferase family. Requires pyridoxal 5'-phosphate as cofactor.

Functionally, positively regulates the expression of the NorB efflux pump and negatively regulates the expression of the AbcA efflux pump. Binds specifically to the promoters of norA, norB and norC and abcA genes. Could also have an aminotransferase activity. This is HTH-type transcriptional regulator NorG (norG) from Staphylococcus aureus (strain USA300).